A 421-amino-acid chain; its full sequence is Adenylosuccinate synthetase (421 aa).

Residues 11–17 and 39–41 each bind GTP; these read GDEGKGK and GHT. D12 functions as the Proton acceptor in the catalytic mechanism. The Mg(2+) site is built by D12 and G39. Residues 12–15, 37–40, T129, R143, N219, T234, and R298 each bind IMP; these read DEGK and NAGH. The active-site Proton donor is the H40. Substrate is bound at residue 294-300; it reads VTTGRRR. GTP-binding positions include R300, 326-328, and 409-411; these read KLD and GTG.

It belongs to the adenylosuccinate synthetase family. In terms of assembly, homodimer. Mg(2+) is required as a cofactor.

The protein resides in the cytoplasm. The enzyme catalyses IMP + L-aspartate + GTP = N(6)-(1,2-dicarboxyethyl)-AMP + GDP + phosphate + 2 H(+). It participates in purine metabolism; AMP biosynthesis via de novo pathway; AMP from IMP: step 1/2. Plays an important role in the de novo pathway and in the salvage pathway of purine nucleotide biosynthesis. Catalyzes the first committed step in the biosynthesis of AMP from IMP. The sequence is that of Adenylosuccinate synthetase from Paracoccidioides brasiliensis (strain Pb03).